A 308-amino-acid chain; its full sequence is Elongation factor Ts (308 aa).

The segment at 80 to 83 (TDFV) is involved in Mg(2+) ion dislocation from EF-Tu.

Belongs to the EF-Ts family.

It localises to the cytoplasm. Its function is as follows. Associates with the EF-Tu.GDP complex and induces the exchange of GDP to GTP. It remains bound to the aminoacyl-tRNA.EF-Tu.GTP complex up to the GTP hydrolysis stage on the ribosome. The polypeptide is Elongation factor Ts (Rhizobium leguminosarum bv. trifolii (strain WSM2304)).